Here is a 61-residue protein sequence, read N- to C-terminus: Small ribosomal subunit protein uS14 (61 aa).

Zn(2+) contacts are provided by Cys24, Cys27, Cys40, and Cys43.

Belongs to the universal ribosomal protein uS14 family. Zinc-binding uS14 subfamily. As to quaternary structure, part of the 30S ribosomal subunit. Contacts proteins S3 and S10. Requires Zn(2+) as cofactor.

Binds 16S rRNA, required for the assembly of 30S particles and may also be responsible for determining the conformation of the 16S rRNA at the A site. In Syntrophobacter fumaroxidans (strain DSM 10017 / MPOB), this protein is Small ribosomal subunit protein uS14.